The primary structure comprises 335 residues: Galactosylgalactosylxylosylprotein 3-beta-glucuronosyltransferase 3 (335 aa).

The Cytoplasmic segment spans residues 1–7; sequence MKLKLKN. A helical; Signal-anchor for type II membrane protein transmembrane segment spans residues 8 to 28; sequence VFLAYFLVSIAGLLYALVQLG. Over 29–335 the chain is Lumenal; the sequence is QPCDCLPPLR…GQGSDPAIEV (307 aa). Residues 82 to 84, D113, R156, R161, and 194 to 196 each bind UDP-alpha-D-glucuronate; these read PTY and DDD. D196 contacts Mn(2+). Positions 243–252 are interaction with galactose moiety of substrate glycoprotein; the sequence is WEPNRPFPLD. E281 serves as the catalytic Proton donor/acceptor. N-linked (GlcNAc...) asparagine glycosylation occurs at N300. 308–310 is a binding site for UDP-alpha-D-glucuronate; sequence HTR. The span at 312-322 shows a compositional bias: basic and acidic residues; the sequence is EKPKMKQEEQL. Positions 312–335 are disordered; sequence EKPKMKQEEQLQRQGQGSDPAIEV.

The protein belongs to the glycosyltransferase 43 family. Homodimer; disulfide-linked. Interacts with PXYLP1; the interaction increases the 2-phosphoxylose phosphatase activity of PXYLP1 during completion of linkage region formation in a B3GAT3-mediated manner. Mn(2+) is required as a cofactor. N-glycosylated. In terms of tissue distribution, expressed in heart, aorta, bone, and also in osteoblasts.

The protein localises to the golgi apparatus membrane. It is found in the golgi apparatus. It localises to the cis-Golgi network. It catalyses the reaction 3-O-(beta-D-galactosyl-(1-&gt;3)-beta-D-galactosyl-(1-&gt;4)-beta-D-xylosyl)-L-seryl-[protein] + UDP-alpha-D-glucuronate = 3-O-(beta-D-GlcA-(1-&gt;3)-beta-D-Gal-(1-&gt;3)-beta-D-Gal-(1-&gt;4)-beta-D-Xyl)-L-seryl-[protein] + UDP + H(+). The protein operates within protein modification; protein glycosylation. In terms of biological role, glycosaminoglycans biosynthesis. Involved in forming the linkage tetrasaccharide present in heparan sulfate and chondroitin sulfate. Transfers a glucuronic acid moiety from the uridine diphosphate-glucuronic acid (UDP-GlcUA) to the common linkage region trisaccharide Gal-beta-1,3-Gal-beta-1,4-Xyl covalently bound to a Ser residue at the glycosaminylglycan attachment site of proteoglycans. Can also play a role in the biosynthesis of l2/HNK-1 carbohydrate epitope on glycoproteins. Stimulates 2-phosphoxylose phosphatase activity of PXYLP1 in presence of uridine diphosphate-glucuronic acid (UDP-GlcUA) during completion of linkage region formation. The chain is Galactosylgalactosylxylosylprotein 3-beta-glucuronosyltransferase 3 (B3gat3) from Mus musculus (Mouse).